Consider the following 731-residue polypeptide: EF-hand calcium-binding domain-containing protein 4B (731 aa).

The segment at 1–45 is disordered; the sequence is MAAPDGRVVSRPQRLGQGSGQGPKGSGACLHPLDSLEQKETQEQT. The EF-hand domain maps to 84-119; the sequence is LSLEELEDVFDALDADGNGYLTPQEFTTGFSHFFFS. Ca(2+) is bound by residues Asp-97, Asp-99, Asn-101, Tyr-103, and Glu-108. Residues 201–382 are a coiled coil; that stretch reads LTRIISQLQE…RERNKHLRDE (182 aa). The segment at 349–540 is proline-rich domain (PRD) which mediates interaction with VAV1; it reads MEVYRVTESL…ALCKEESSPS (192 aa). 2 disordered regions span residues 426–466 and 494–528; these read SEEE…PYPR and CSEE…QPVG. 9 residues coordinate GTP: Ser-554, Val-556, Gly-557, Lys-558, Thr-559, Ser-560, Ser-571, Pro-572, and Thr-577. Residue Thr-559 participates in Mg(2+) binding. Positions 572–580 are switch-I; it reads PGMAATVGI. Mg(2+)-binding residues include Thr-577 and Asp-600. The GTP site is built by Gly-603, Asn-658, Lys-659, Asp-661, and Ala-689. Residues 603-619 form a switch-II region; that stretch reads GQERYRCITQQFFRKAD. A lipid anchor (S-geranylgeranyl cysteine) is attached at Cys-729.

The protein belongs to the EFCAB4 family. Interacts with ORAI1 and STIM1; the interaction is direct and takes place in absence of Ca(2+). Forms a complex with ORAI1 and STIM1 at low concentration of Ca(2+), the complex dissociates at elevated Ca(2+) concentrations. Interacts with ORAI2 and ORAI3. As to quaternary structure, interacts with DYNC1H1. Interacts with the dynein-dynactin complex in a Ca(2+)-dependent manner. Interacts with VAV1. It depends on Mg(2+) as a cofactor. In terms of tissue distribution, expressed in the Jurkat T-cell line. Expressed in endothelial cells. Expressed in Weibel-Palade bodies (which are P-selectin/SELP negative) in endothelial cells. Expressed in the Jurkat T-cell line.

The protein resides in the cytoplasm. Its subcellular location is the cytoskeleton. It is found in the microtubule organizing center. The protein localises to the cell membrane. It localises to the golgi apparatus membrane. The protein resides in the golgi apparatus. Its subcellular location is the trans-Golgi network membrane. It is found in the vesicle. It catalyses the reaction GTP + H2O = GDP + phosphate + H(+). Its function is as follows. Ca(2+)-binding protein that plays a key role in store-operated Ca(2+) entry (SOCE) in T-cells by regulating CRAC channel activation. Acts as a cytoplasmic calcium-sensor that facilitates the clustering of ORAI1 and STIM1 at the junctional regions between the plasma membrane and the endoplasmic reticulum upon low Ca(2+) concentration. It thereby regulates CRAC channel activation, including translocation and clustering of ORAI1 and STIM1. Upon increase of cytoplasmic Ca(2+) resulting from opening of CRAC channels, dissociates from ORAI1 and STIM1, thereby destabilizing the ORAI1-STIM1 complex. Functionally, rab GTPase that mediates the trafficking of Weibel-Palade bodies (WPBs) to microtubule organizing center (MTOC) in endothelial cells in response to acute inflammatory stimuli. During histamine (but not thrombin) stimulation of endothelial cells, the dynein-bound form induces retrograde transport of a subset of WPBs along microtubules to the MTOC in a Ca(2+)-independent manner and its GTPase activity is essential for this function. Ca(2+)-regulated dynein adapter protein that activates dynein-mediated transport and dynein-dynactin motility on microtubules and regulates endosomal trafficking of CD47. Acts as an intracellular signaling module bridging two important T-cell receptor (TCR) signaling pathways, Ca(2+)-NFAT and JNK, to affect T-cell activation. In resting T-cells, is predominantly localized near TGN network in a GTP-bound form, upon TCR stimulation, localizes at the immunological synapse via interaction with VAV1 to activate downstream Ca(2+)-NFAT and JNK signaling pathways. Plays a role in T-helper 1 (Th1) cell differentiation and T-helper 17 (Th17) cell effector function. Plays a role in store-operated Ca(2+) entry (SOCE) in T-cells by regulating CRAC channel activation. This is EF-hand calcium-binding domain-containing protein 4B from Homo sapiens (Human).